A 334-amino-acid polypeptide reads, in one-letter code: Cathepsin L2 (334 aa).

The N-terminal stretch at 1-17 is a signal peptide; it reads MNLSLVLAAFCLGIASA. The propeptide at 18–113 is activation peptide; that stretch reads VPKFDQNLDT…KVFREPLFLD (96 aa). 2 disulfide bridges follow: cysteine 135–cysteine 178 and cysteine 169–cysteine 211. Cysteine 138 is a catalytic residue. N-linked (GlcNAc...) asparagine glycosylation is present at asparagine 221. Cysteines 270 and 323 form a disulfide. Residue histidine 277 is part of the active site. Asparagine 292 carries N-linked (GlcNAc...) asparagine glycosylation. Asparagine 301 is a catalytic residue.

The protein belongs to the peptidase C1 family. Predominantly expressed in the thymus and testis. Also expressed in corneal epithelium, and to a lesser extent in conjunctival epithelium and skin.

The protein localises to the lysosome. The catalysed reaction is The recombinant enzyme hydrolyzes proteins (serum albumin, collagen) and synthetic substrates (Z-Phe-Arg-NHMec &gt; Z-Leu-Arg-NHMec &gt; Z-Val-Arg-NHMec).. Its activity is regulated as follows. Inhibited by CST6. Functionally, cysteine protease. May have an important role in corneal physiology. This Homo sapiens (Human) protein is Cathepsin L2 (CTSV).